A 437-amino-acid chain; its full sequence is Probable peptidoglycan-N-acetylglucosamine deacetylase ARB_03699 (437 aa).

Residues 1-20 form the signal peptide; it reads MLMRLYTFFAAALLACCAAA. Residues 47-132 are disordered; the sequence is STRAATTTTT…STSAAAPSTP (86 aa). Residue asparagine 99 is glycosylated (N-linked (GlcNAc...) asparagine). One can recognise a NodB homology domain in the interval 149-334; sequence GTVAITFDDG…EVKRRGLKAV (186 aa). The active-site Proton acceptor is the aspartate 156. Aspartate 157, histidine 209, and histidine 213 together coordinate Zn(2+). Substrate is bound at residue tyrosine 251. Residue histidine 308 is the Proton donor of the active site. Residues 350-370 show a composition bias toward low complexity; that stretch reads TTPVQVPTGTSTTSPTATPTS. A disordered region spans residues 350 to 384; sequence TTPVQVPTGTSTTSPTATPTSPGTPPPAPTQPGVA. The 47-residue stretch at 389–435 folds into the LysM domain; sequence KWHTVVSGDTCYDIAAANGISLDNLYKWNPAVGTSCASLWLGYAVCV.

It depends on Zn(2+) as a cofactor. Co(2+) serves as cofactor.

The protein resides in the secreted. The catalysed reaction is peptidoglycan-N-acetyl-D-glucosamine + H2O = peptidoglycan-D-glucosamine + acetate.. In terms of biological role, catalyzes the deacetylation of N-acetylglucosamine (GlcNAc) residues in peptidoglycan. The chain is Probable peptidoglycan-N-acetylglucosamine deacetylase ARB_03699 from Arthroderma benhamiae (strain ATCC MYA-4681 / CBS 112371) (Trichophyton mentagrophytes).